The sequence spans 372 residues: Steroid C26-monooxygenase (372 aa).

Position 314 (C314) interacts with heme.

It belongs to the cytochrome P450 family. Requires heme as cofactor.

The enzyme catalyses cholest-4-en-3-one + 6 reduced [2Fe-2S]-[ferredoxin] + 3 O2 + 5 H(+) = (25R)-3-oxocholest-4-en-26-oate + 6 oxidized [2Fe-2S]-[ferredoxin] + 4 H2O. It participates in steroid metabolism; cholesterol degradation. Its function is as follows. Involved in the utilization of cholesterol as the sole carbon and energy source by degrading the side chain during infection. Primarily catalyzes the sequential oxidation of the terminal methyl of cholest-4-en-3-one into (25R)-26-hydroxycholest-4-en-3-one (alcohol), (25R)-26-oxocholest-4-en-3-one (aldehyde), to finally yield the carboxylic acid (25R)-3-oxocholest-4-en-26-oate. Also able to sequentially oxidize cholesterol itself, not only cholest-4-en-3-one. The chain is Steroid C26-monooxygenase (cyp142) from Mycobacterium tuberculosis (strain CDC 1551 / Oshkosh).